The sequence spans 270 residues: Triosephosphate isomerase (270 aa).

27 to 29 (NWK) is a substrate binding site. The active-site Electrophile is His114. Catalysis depends on Glu184, which acts as the Proton acceptor. Residues Gly190, Ser230, and 251–252 (GG) each bind substrate.

This sequence belongs to the triosephosphate isomerase family. As to quaternary structure, homodimer.

It is found in the cytoplasm. It carries out the reaction D-glyceraldehyde 3-phosphate = dihydroxyacetone phosphate. Its pathway is carbohydrate biosynthesis; gluconeogenesis. It functions in the pathway carbohydrate degradation; glycolysis; D-glyceraldehyde 3-phosphate from glycerone phosphate: step 1/1. Functionally, involved in the gluconeogenesis. Catalyzes stereospecifically the conversion of dihydroxyacetone phosphate (DHAP) to D-glyceraldehyde-3-phosphate (G3P). In Chlamydia muridarum (strain MoPn / Nigg), this protein is Triosephosphate isomerase.